The chain runs to 197 residues: Dehydrin DHN1 (197 aa).

Residues 1-14 (MSQYQNQYGAQTGM) show a composition bias toward polar residues. 2 disordered regions span residues 1-86 (MSQY…GTNP) and 133-197 (GTEQ…CTGH). Repeat copies occupy residues 16–21 (DEYGNP) and 26–31 (DQYGNP). The interval 16-31 (DEYGNPVNQVDQYGNP) is 2 X approximate repeats. Positions 74–83 (THTGGVGGYG) are enriched in gly residues. A 2-1 repeat occupies 126 to 133 (KIKEKIPG). Residues 126 to 190 (KIKEKIPGTE…MDKIKEKLPG (65 aa)) are 2 X approximate repeats. Over residues 144–160 (AGYGSTGYGASGGGIGN) the composition is skewed to gly residues. Residues 165 to 188 (YVREEHRVDHGEKKGIMDKIKEKL) show a composition bias toward basic and acidic residues. The stretch at 183–190 (KIKEKLPG) is one 2-2 repeat.

This sequence belongs to the plant dehydrin family. In terms of tissue distribution, shoots, roots, and cotyledon from dehydrating seedlings.

The chain is Dehydrin DHN1 (DHN1) from Pisum sativum (Garden pea).